Consider the following 554-residue polypeptide: Urocanate hydratase (554 aa).

NAD(+) is bound by residues Gly-51–Gly-52, Gln-129, Gly-175–Gly-177, Glu-195, Asn-241–Ala-242, Gln-262–His-266, Tyr-272–Leu-273, and Tyr-321. The active site involves Cys-409. An NAD(+)-binding site is contributed by Gly-491.

It belongs to the urocanase family. The cofactor is NAD(+).

It is found in the cytoplasm. It carries out the reaction 4-imidazolone-5-propanoate = trans-urocanate + H2O. Its pathway is amino-acid degradation; L-histidine degradation into L-glutamate; N-formimidoyl-L-glutamate from L-histidine: step 2/3. Catalyzes the conversion of urocanate to 4-imidazolone-5-propionate. In Methylobacterium nodulans (strain LMG 21967 / CNCM I-2342 / ORS 2060), this protein is Urocanate hydratase.